We begin with the raw amino-acid sequence, 145 residues long: 5-hydroxymethyl-dUMP N-hydrolase (145 aa).

8 residues coordinate 5-hydroxymethyl-dUMP: Gly7, Ile9, Arg10, Gly11, Ser79, Gly81, Glu85, and Ser109.

It belongs to the 2'-deoxynucleoside 5'-phosphate N-hydrolase 1 family. Monomer and homodimer.

The protein resides in the cytoplasm. The protein localises to the nucleus. The catalysed reaction is 5-hydroxymethyl-dUMP + H2O = 5-hydroxymethyluracil + 2-deoxy-D-ribose 5-phosphate. Functionally, part of a nucleotide salvage pathway that eliminates epigenetically modified 5-hydroxymethyl-dCMP (hmdCMP) in a two-step process entailing deamination to cytotoxic 5-hydroxymethyl-dUMP (hmdUMP), followed by its hydrolysis into 5-hydroxymethyluracil (hmU) and 2-deoxy-D-ribose 5-phosphate (deoxyribosephosphate). Catalyzes the second step in that pathway, the hydrolysis of the N-glycosidic bond in hmdUMP, degrading this cytotoxic nucleotide to avoid its genomic integration. The chain is 5-hydroxymethyl-dUMP N-hydrolase from Esox lucius (Northern pike).